A 123-amino-acid chain; its full sequence is uncharacterized protein (123 aa).

The segment at 100 to 123 is disordered; sequence NKQPKTTHHFSTNSSEYKSRKSKH.

This is an uncharacterized protein from Acanthamoeba polyphaga mimivirus (APMV).